Consider the following 64-residue polypeptide: Large ribosomal subunit protein bL35 (64 aa).

Basic residues predominate over residues 38 to 53 (KRKANLNAPKHVHHTN). The segment at 38–64 (KRKANLNAPKHVHHTNAHSVMSLLCRA) is disordered.

The protein belongs to the bacterial ribosomal protein bL35 family.

The chain is Large ribosomal subunit protein bL35 from Helicobacter pylori (strain G27).